A 430-amino-acid chain; its full sequence is Proteasome-activating nucleotidase (430 aa).

A coiled-coil region spans residues 9 to 89 (TELKKEKKAF…LRRELDRMRV (81 aa)). ATP contacts are provided by residues 214-219 (GTGKTL) and histidine 353. Residues 428 to 430 (LYR) form a docks into pockets in the proteasome alpha-ring to cause gate opening region.

The protein belongs to the AAA ATPase family. As to quaternary structure, homohexamer. The hexameric complex has a two-ring architecture resembling a top hat that caps the 20S proteasome core at one or both ends. Alone, can form a complex composed of two stacked hexameric rings in vitro. Upon ATP-binding, the C-terminus of PAN interacts with the alpha-rings of the proteasome core by binding to the intersubunit pockets.

It is found in the cytoplasm. ATPase activity is inhibited by EDTA, N-ethylmaleimide (NEM) and p-chloromercuriphenyl-sulfonic acid (PCMS) in vitro. Its function is as follows. ATPase which is responsible for recognizing, binding, unfolding and translocation of substrate proteins into the archaeal 20S proteasome core particle. Is essential for opening the gate of the 20S proteasome via an interaction with its C-terminus, thereby allowing substrate entry and access to the site of proteolysis. Thus, the C-termini of the proteasomal ATPase function like a 'key in a lock' to induce gate opening and therefore regulate proteolysis. Unfolding activity requires energy from ATP hydrolysis, whereas ATP binding alone promotes ATPase-20S proteasome association which triggers gate opening, and supports translocation of unfolded substrates. In addition to ATP, is able to cleave other nucleotide triphosphates such as CTP, GTP and UTP, but hydrolysis of these other nucleotides is less effective in promoting proteolysis than ATP. Moreover, PAN by itself can function as a chaperone in vitro. This chain is Proteasome-activating nucleotidase, found in Methanocaldococcus jannaschii (strain ATCC 43067 / DSM 2661 / JAL-1 / JCM 10045 / NBRC 100440) (Methanococcus jannaschii).